The chain runs to 911 residues: Leucine--tRNA ligase (911 aa).

Residues 42–52 carry the 'HIGH' region motif; it reads PYPSGKLHMGH. A 'KMSKS' region motif is present at residues 659–663; that stretch reads TMSKS. Lys662 contributes to the ATP binding site.

It belongs to the class-I aminoacyl-tRNA synthetase family.

It localises to the cytoplasm. It catalyses the reaction tRNA(Leu) + L-leucine + ATP = L-leucyl-tRNA(Leu) + AMP + diphosphate. The protein is Leucine--tRNA ligase of Delftia acidovorans (strain DSM 14801 / SPH-1).